The sequence spans 129 residues: Small ribosomal subunit protein uS11 (129 aa).

Belongs to the universal ribosomal protein uS11 family. In terms of assembly, part of the 30S ribosomal subunit. Interacts with proteins S7 and S18. Binds to IF-3.

Its function is as follows. Located on the platform of the 30S subunit, it bridges several disparate RNA helices of the 16S rRNA. Forms part of the Shine-Dalgarno cleft in the 70S ribosome. This is Small ribosomal subunit protein uS11 from Geobacillus thermodenitrificans (strain NG80-2).